The following is a 122-amino-acid chain: Large ribosomal subunit protein uL14c (122 aa).

This sequence belongs to the universal ribosomal protein uL14 family. As to quaternary structure, part of the 50S ribosomal subunit.

The protein localises to the plastid. It localises to the chloroplast. Its function is as follows. Binds to 23S rRNA. This chain is Large ribosomal subunit protein uL14c, found in Manihot esculenta (Cassava).